Reading from the N-terminus, the 291-residue chain is MILFFEYAIASGFEDEGILEEGKMMFNTLLNQFLEIDNVTSLIHKDFADDYKDFENLKIVEIEDDKDIEIKLNDILKNEKIDYALTIAPEDENILYNLTKIIEKYPVKNLGCSSNAIKVAGDKYLTYLTIKDYVKTPKTFKPKKYVIKKIDGCGGKFNLFDENFLIQEFVEGESLSVSLIVGKKIYPLSLNRQYIDERGFVGGEVNIKHRLKDEIFNEAIKAVKCIDGLNGYVGVDVIVNDEIYIIEINPRITTTIYGLKTEPSLAELLIKNANNEELTFKVEGKEFTINK.

The ATP-grasp domain maps to Lys-104–Asn-274. Lys-131 to Ser-176 contributes to the ATP binding site. Mg(2+) is bound by residues Asp-236, Glu-247, and Asn-249. Mn(2+)-binding residues include Asp-236, Glu-247, and Asn-249.

Mg(2+) is required as a cofactor. Mn(2+) serves as cofactor.

The catalysed reaction is tyramine + L-glutamate + ATP = gamma-L-glutamyltyramine + ADP + phosphate + H(+). It participates in cofactor biosynthesis; methanofuran biosynthesis. In terms of biological role, catalyzes the formation of an amide bond between tyramine and the gamma carboxy group of L-glutamate. The enzyme also accepts phenylethylamine in vitro. The chain is Tyramine--L-glutamate ligase from Methanocaldococcus fervens (strain DSM 4213 / JCM 15782 / AG86) (Methanococcus fervens).